A 322-amino-acid polypeptide reads, in one-letter code: Phosphoenolpyruvate transferase (322 aa).

Asp-58 lines the 7,8-didemethyl-8-hydroxy-5-deazariboflavin pocket.

The protein belongs to the CofD family. In terms of assembly, homodimer. Mg(2+) is required as a cofactor.

The catalysed reaction is enolpyruvoyl-2-diphospho-5'-guanosine + 7,8-didemethyl-8-hydroxy-5-deazariboflavin = dehydro coenzyme F420-0 + GMP + H(+). The protein operates within cofactor biosynthesis; coenzyme F420 biosynthesis. Its function is as follows. Catalyzes the transfer of the phosphoenolpyruvate moiety from enoylpyruvoyl-2-diphospho-5'-guanosine (EPPG) to 7,8-didemethyl-8-hydroxy-5-deazariboflavin (FO) with the formation of dehydro coenzyme F420-0 and GMP. This Thermobifida fusca (strain YX) protein is Phosphoenolpyruvate transferase.